A 512-amino-acid chain; its full sequence is MEELKALRLKEKILEIELNSVKMQIHAYEESLKATTVNSVQEGEILQTESIPECPAQGKETPNPVKADSLLKTILGNERQNPLEGKSSKLVNLTPKSDKDKVKSSPVANGSGKDSTNPLNPVALGKSKMTILGQKQADEEEFKPDYLRAASNGQSWFAVYKGPNKEFFTEWEIVADICKKRQKSKRFRSKEQAEVSISLYNKDIQDPVNFLRPVKLVKEERAAQPLKFKAIAAEQTIQFDEFRQIWEKSRLSDLEDGVQEKFYTNDSASKSTYTFVENAEPYLVHTAFRAGLAKVIYPSPNLQELKWFPEGIVKAIKNFRKKVLNAKDAAIFIKIFSSIPDWVQSTRYEPYHFIQIGIAKTKKELPSSKVCKEEFSVQSLNKVRVQSLQTISQKLQEINEESSIKVNYCSSTCIMVSKFQKKTSTEDLKLVGIFESNLVNIEQLACGDQTKKEWCRIVRRTYQKHLCLYCKDKADSSSTSGEQNNVEKSCPDSPLTNAYDERSDDHKRIPSI.

Disordered stretches follow at residues 76 to 123 (GNER…NPVA) and 474 to 512 (ADSS…IPSI). Residues 476–487 (SSSTSGEQNNVE) are compositionally biased toward polar residues. Positions 499–512 (YDERSDDHKRIPSI) are enriched in basic and acidic residues.

This sequence belongs to the caulimoviridae viroplasmin family.

It is found in the host cytoplasm. Its function is as follows. Enhances the translation of downstream ORFs on polycistronic mRNAs derived from figwort mosaic virus. This chain is Transactivator/viroplasmin protein, found in Figwort mosaic virus (strain DxS) (FMV).